Here is a 299-residue protein sequence, read N- to C-terminus: tRNA-cytidine(32) 2-sulfurtransferase (299 aa).

A PP-loop motif motif is present at residues 56 to 61 (SGGKDS). The [4Fe-4S] cluster site is built by C131, C134, and C222.

It belongs to the TtcA family. In terms of assembly, homodimer. The cofactor is Mg(2+). [4Fe-4S] cluster is required as a cofactor.

It is found in the cytoplasm. It catalyses the reaction cytidine(32) in tRNA + S-sulfanyl-L-cysteinyl-[cysteine desulfurase] + AH2 + ATP = 2-thiocytidine(32) in tRNA + L-cysteinyl-[cysteine desulfurase] + A + AMP + diphosphate + H(+). It participates in tRNA modification. Functionally, catalyzes the ATP-dependent 2-thiolation of cytidine in position 32 of tRNA, to form 2-thiocytidine (s(2)C32). The sulfur atoms are provided by the cysteine/cysteine desulfurase (IscS) system. The polypeptide is tRNA-cytidine(32) 2-sulfurtransferase (Xylella fastidiosa (strain 9a5c)).